The primary structure comprises 301 residues: N-acetylmuramic acid 6-phosphate etherase (301 aa).

The 164-residue stretch at 57 to 220 (TYEKMLFGGR…STSLMIKKGK (164 aa)) folds into the SIS domain. Glu-85 (proton donor) is an active-site residue. Residue Glu-116 is part of the active site.

This sequence belongs to the GCKR-like family. MurNAc-6-P etherase subfamily. In terms of assembly, homodimer.

The enzyme catalyses N-acetyl-D-muramate 6-phosphate + H2O = N-acetyl-D-glucosamine 6-phosphate + (R)-lactate. It functions in the pathway amino-sugar metabolism; N-acetylmuramate degradation. Functionally, specifically catalyzes the cleavage of the D-lactyl ether substituent of MurNAc 6-phosphate, producing GlcNAc 6-phosphate and D-lactate. This is N-acetylmuramic acid 6-phosphate etherase from Clostridium botulinum (strain Eklund 17B / Type B).